Reading from the N-terminus, the 437-residue chain is GTPase Obg (437 aa).

An Obg domain is found at S2–L160. Positions A161–A338 constitute an OBG-type G domain. Residues G167 to S174, F192 to T196, D214 to G217, N284 to D287, and S319 to L321 contribute to the GTP site. Positions 174 and 194 each coordinate Mg(2+). The OCT domain maps to G359–D437.

Belongs to the TRAFAC class OBG-HflX-like GTPase superfamily. OBG GTPase family. As to quaternary structure, monomer. Mg(2+) serves as cofactor.

It localises to the cytoplasm. An essential GTPase which binds GTP, GDP and possibly (p)ppGpp with moderate affinity, with high nucleotide exchange rates and a fairly low GTP hydrolysis rate. Plays a role in control of the cell cycle, stress response, ribosome biogenesis and in those bacteria that undergo differentiation, in morphogenesis control. The protein is GTPase Obg of Lactococcus lactis subsp. cremoris (strain SK11).